We begin with the raw amino-acid sequence, 477 residues long: Ribulose bisphosphate carboxylase large chain (477 aa).

A propeptide spanning residues 1-2 (MS) is cleaved from the precursor. Position 3 is an N-acetylproline (proline 3). Lysine 14 is modified (N6,N6,N6-trimethyllysine). Residues asparagine 123 and threonine 173 each coordinate substrate. Catalysis depends on lysine 175, which acts as the Proton acceptor. Lysine 177 serves as a coordination point for substrate. Residues lysine 201, aspartate 203, and glutamate 204 each coordinate Mg(2+). At lysine 201 the chain carries N6-carboxylysine. Histidine 294 serves as the catalytic Proton acceptor. Substrate-binding residues include arginine 295, histidine 327, and serine 379.

The protein belongs to the RuBisCO large chain family. Type I subfamily. Heterohexadecamer of 8 large chains and 8 small chains; disulfide-linked. The disulfide link is formed within the large subunit homodimers. Mg(2+) serves as cofactor. In terms of processing, the disulfide bond which can form in the large chain dimeric partners within the hexadecamer appears to be associated with oxidative stress and protein turnover.

The protein localises to the plastid. It is found in the chloroplast. The catalysed reaction is 2 (2R)-3-phosphoglycerate + 2 H(+) = D-ribulose 1,5-bisphosphate + CO2 + H2O. It catalyses the reaction D-ribulose 1,5-bisphosphate + O2 = 2-phosphoglycolate + (2R)-3-phosphoglycerate + 2 H(+). Its function is as follows. RuBisCO catalyzes two reactions: the carboxylation of D-ribulose 1,5-bisphosphate, the primary event in carbon dioxide fixation, as well as the oxidative fragmentation of the pentose substrate in the photorespiration process. Both reactions occur simultaneously and in competition at the same active site. The sequence is that of Ribulose bisphosphate carboxylase large chain (rbcL) from Solanum lycopersicum (Tomato).